A 252-amino-acid chain; its full sequence is MSGHSKWANIKNRKAKVDEKRGRLFTKIGREIIIAARMGGGDPEGNMRLKAAIAKAKAANMPNENIQRAIMRGTGELEGAAYEEMTYEGYGPGGVAMLLNIATDNRNRTASEIRYIFSRGGGNLGESGCVAWMFNPKGVITVEVPAGDKREEVILQAIEAGAEDVDDEDDEVLEIKTAPGDLEAVREALEASGVTITHAEVEMVPQTTVTIDDPETAGKVMRLIERLEDHDDVQAVYTNADIPAAIMDQLDI.

The protein belongs to the TACO1 family.

The protein resides in the cytoplasm. The protein is Probable transcriptional regulatory protein Moth_1704 of Moorella thermoacetica (strain ATCC 39073 / JCM 9320).